Reading from the N-terminus, the 212-residue chain is Phosphoribosylformylglycinamidine synthase subunit PurQ (212 aa).

Residues 2 to 212 (RIAVLKFPGT…WLGLISWLRR (211 aa)) form the Glutamine amidotransferase type-1 domain. The active-site Nucleophile is cysteine 85. Residues histidine 183, glutamate 185, and histidine 191 contribute to the active site.

In terms of assembly, part of the FGAM synthase complex composed of 1 PurL, 1 PurQ and 2 PurS subunits.

The protein localises to the cytoplasm. The enzyme catalyses N(2)-formyl-N(1)-(5-phospho-beta-D-ribosyl)glycinamide + L-glutamine + ATP + H2O = 2-formamido-N(1)-(5-O-phospho-beta-D-ribosyl)acetamidine + L-glutamate + ADP + phosphate + H(+). It catalyses the reaction L-glutamine + H2O = L-glutamate + NH4(+). Its pathway is purine metabolism; IMP biosynthesis via de novo pathway; 5-amino-1-(5-phospho-D-ribosyl)imidazole from N(2)-formyl-N(1)-(5-phospho-D-ribosyl)glycinamide: step 1/2. Its function is as follows. Part of the phosphoribosylformylglycinamidine synthase complex involved in the purines biosynthetic pathway. Catalyzes the ATP-dependent conversion of formylglycinamide ribonucleotide (FGAR) and glutamine to yield formylglycinamidine ribonucleotide (FGAM) and glutamate. The FGAM synthase complex is composed of three subunits. PurQ produces an ammonia molecule by converting glutamine to glutamate. PurL transfers the ammonia molecule to FGAR to form FGAM in an ATP-dependent manner. PurS interacts with PurQ and PurL and is thought to assist in the transfer of the ammonia molecule from PurQ to PurL. The sequence is that of Phosphoribosylformylglycinamidine synthase subunit PurQ from Pyrobaculum aerophilum (strain ATCC 51768 / DSM 7523 / JCM 9630 / CIP 104966 / NBRC 100827 / IM2).